The following is an 83-amino-acid chain: Putative membrane protein insertion efficiency factor (83 aa).

The segment at 63 to 83 is disordered; that stretch reads GGNDPVPDHFSLRRNKTDISD. Over residues 68 to 83 the composition is skewed to basic and acidic residues; that stretch reads VPDHFSLRRNKTDISD.

Belongs to the UPF0161 family.

The protein localises to the cell membrane. Functionally, could be involved in insertion of integral membrane proteins into the membrane. The chain is Putative membrane protein insertion efficiency factor from Streptococcus agalactiae serotype Ia (strain ATCC 27591 / A909 / CDC SS700).